The chain runs to 134 residues: Small ribosomal subunit protein uS11 (134 aa).

This sequence belongs to the universal ribosomal protein uS11 family. As to quaternary structure, part of the 30S ribosomal subunit. Interacts with proteins S7 and S18. Binds to IF-3.

Located on the platform of the 30S subunit, it bridges several disparate RNA helices of the 16S rRNA. Forms part of the Shine-Dalgarno cleft in the 70S ribosome. This is Small ribosomal subunit protein uS11 from Frankia alni (strain DSM 45986 / CECT 9034 / ACN14a).